A 319-amino-acid polypeptide reads, in one-letter code: ATP-dependent 6-phosphofructokinase (319 aa).

Position 11 (Gly-11) interacts with ATP. Residue 21–25 participates in ADP binding; the sequence is RAVVR. Residues 72-73 and 102-105 contribute to the ATP site; these read RC and GDGS. Mg(2+) is bound at residue Asp-103. 125–127 lines the substrate pocket; it reads TID. Catalysis depends on Asp-127, which acts as the Proton acceptor. Position 154 (Arg-154) interacts with ADP. Residue 169–171 participates in substrate binding; it reads MGR. ADP is bound by residues 185–187, Arg-211, and 213–215; these read GAE and KKH. Substrate contacts are provided by residues Glu-222, Arg-243, and 249–252; that span reads HIQR.

It belongs to the phosphofructokinase type A (PFKA) family. ATP-dependent PFK group I subfamily. Prokaryotic clade 'B1' sub-subfamily. Homotetramer. It depends on Mg(2+) as a cofactor.

It localises to the cytoplasm. The enzyme catalyses beta-D-fructose 6-phosphate + ATP = beta-D-fructose 1,6-bisphosphate + ADP + H(+). It functions in the pathway carbohydrate degradation; glycolysis; D-glyceraldehyde 3-phosphate and glycerone phosphate from D-glucose: step 3/4. With respect to regulation, allosterically activated by ADP and other diphosphonucleosides, and allosterically inhibited by phosphoenolpyruvate. Catalyzes the phosphorylation of D-fructose 6-phosphate to fructose 1,6-bisphosphate by ATP, the first committing step of glycolysis. This chain is ATP-dependent 6-phosphofructokinase, found in Lysinibacillus sphaericus (Bacillus sphaericus).